Here is a 195-residue protein sequence, read N- to C-terminus: Probable DNA-directed RNA polymerase subunit delta (195 aa).

The region spanning 14-83 (LSMIEVARAI…GDNKWGLRSW (70 aa)) is the HTH HARE-type domain. Acidic residues-rich tracts occupy residues 119-138 (GDEDAIDYSDDDPEDEDSYE) and 145-195 (YDDE…GEEE). Residues 119-195 (GDEDAIDYSD…SDDDAEGEEE (77 aa)) form a disordered region.

Belongs to the RpoE family. As to quaternary structure, RNAP is composed of a core of 2 alpha, a beta and a beta' subunits. The core is associated with a delta subunit and one of several sigma factors.

Functionally, participates in both the initiation and recycling phases of transcription. In the presence of the delta subunit, RNAP displays an increased specificity of transcription, a decreased affinity for nucleic acids, and an increased efficiency of RNA synthesis because of enhanced recycling. This Streptococcus gordonii (strain Challis / ATCC 35105 / BCRC 15272 / CH1 / DL1 / V288) protein is Probable DNA-directed RNA polymerase subunit delta.